The following is a 432-amino-acid chain: Adenosylhomocysteinase (432 aa).

Residue Ser2 is modified to N-acetylserine. Substrate-binding residues include Thr57, Asp131, and Glu156. A Phosphoserine modification is found at Ser183. An NAD binding region spans residues Ser183–Ala350. Substrate contacts are provided by Lys186 and Asp190. Lys186 bears the N6-(2-hydroxyisobutyryl)lysine mark. At Tyr193 the chain carries Phosphotyrosine.

Belongs to the adenosylhomocysteinase family. In terms of assembly, homotetramer. Interaction with AHCYL1. The cofactor is NAD(+).

Its subcellular location is the cytoplasm. It is found in the melanosome. It localises to the nucleus. The protein localises to the endoplasmic reticulum. It catalyses the reaction S-adenosyl-L-homocysteine + H2O = L-homocysteine + adenosine. It participates in amino-acid biosynthesis; L-homocysteine biosynthesis; L-homocysteine from S-adenosyl-L-homocysteine: step 1/1. In terms of biological role, catalyzes the hydrolysis of S-adenosyl-L-homocysteine to form adenosine and homocysteine. Binds copper ions. In Sus scrofa (Pig), this protein is Adenosylhomocysteinase (AHCY).